Reading from the N-terminus, the 259-residue chain is GTP cyclohydrolase FolE2 (259 aa).

Belongs to the GTP cyclohydrolase IV family.

The catalysed reaction is GTP + H2O = 7,8-dihydroneopterin 3'-triphosphate + formate + H(+). Its pathway is cofactor biosynthesis; 7,8-dihydroneopterin triphosphate biosynthesis; 7,8-dihydroneopterin triphosphate from GTP: step 1/1. Functionally, converts GTP to 7,8-dihydroneopterin triphosphate. This chain is GTP cyclohydrolase FolE2, found in Thermotoga neapolitana (strain ATCC 49049 / DSM 4359 / NBRC 107923 / NS-E).